Consider the following 733-residue polypeptide: Cell division cycle protein 48 homolog AF_1297 (733 aa).

ATP contacts are provided by residues 223–230 (GPPGTGKT) and 496–503 (GPPGTGKT).

The protein belongs to the AAA ATPase family. CDC48 subfamily.

This is Cell division cycle protein 48 homolog AF_1297 from Archaeoglobus fulgidus (strain ATCC 49558 / DSM 4304 / JCM 9628 / NBRC 100126 / VC-16).